Consider the following 133-residue polypeptide: Putative nickel-responsive regulator (133 aa).

4 residues coordinate Ni(2+): histidine 74, histidine 85, histidine 87, and cysteine 93.

It belongs to the transcriptional regulatory CopG/NikR family. Requires Ni(2+) as cofactor.

In terms of biological role, transcriptional regulator. This chain is Putative nickel-responsive regulator, found in Saccharolobus islandicus (strain Y.N.15.51 / Yellowstone #2) (Sulfolobus islandicus).